The sequence spans 591 residues: Probable auxin efflux carrier component 3b (591 aa).

Over 1–6 the chain is Extracellular; it reads MISWHE. Residues 7–27 form a helical membrane-spanning segment; the sequence is LYMVLSAVVPLYVAMMVAYGS. The Cytoplasmic portion of the chain corresponds to 28–38; it reads VRWWGVLTPEQ. The helical transmembrane segment at 39 to 59 threads the bilayer; it reads CSGINRFVAVIAVPLLSFHFI. Val51 is a binding site for (indol-3-yl)acetate. Residues 60-70 are Extracellular-facing; that stretch reads SSSDPYAMNLR. The chain crosses the membrane as a helical span at residues 71 to 93; that stretch reads FVAADTLQKVLVLAALAAWSRFP. Topologically, residues 94 to 107 are cytoplasmic; sequence ARFVPPAWPPLDCS. The chain crosses the membrane as a helical span at residues 108-128; it reads ITLFSVSTLPNTLVMGIPLLV. Residues Asn118 and Leu120 each contribute to the (indol-3-yl)acetate site. The Extracellular portion of the chain corresponds to 129–137; it reads SMYGPYSGD. A helical transmembrane segment spans residues 138–158; it reads LMVQIVVLQSIVWYTLLLFLF. Tyr151 lines the (indol-3-yl)acetate pocket. Residues 159-450 are Cytoplasmic-facing; sequence EFRAARVLIA…LIRNPNTYAS (292 aa). Composition is skewed to polar residues over residues 243–254 and 283–292; these read SRNATPRGSTFT and SSSRQHTPRP. 4 disordered regions span residues 243 to 269, 283 to 313, 344 to 374, and 392 to 420; these read SRNA…SALR, SSSR…APTN, ETRR…GERA, and AGAK…RARG. Positions 395-407 are enriched in low complexity; that stretch reads KTEQQTTAVTTTT. A helical transmembrane segment spans residues 451 to 471; it reads LIGLTWSLIAFRFHITMPIIV. At 472–474 the chain is on the extracellular side; sequence AKS. A helical transmembrane segment spans residues 475-495; the sequence is ISILSDAGLGMAMFSLGLFMA. Residues 496-511 are Cytoplasmic-facing; that stretch reads TQPKIIACGYSVAAAS. A helical membrane pass occupies residues 512 to 532; the sequence is MGVRFFFGPAIMAAASAAVGI. Over 533–535 the chain is Extracellular; it reads RGT. The helical transmembrane segment at 536-556 threads the bilayer; it reads LLRIAIVQAALPQGIVPFVFA. 2 residues coordinate (indol-3-yl)acetate: Ile550 and Val551. Over 557-568 the chain is Cytoplasmic; that stretch reads KEYNLHATILCT. A helical membrane pass occupies residues 569-589; that stretch reads LVIFGMLIALPITLVYYIILG. At 590–591 the chain is on the extracellular side; sequence LL.

The protein belongs to the auxin efflux carrier (TC 2.A.69.1) family. As to quaternary structure, homodimer. In terms of tissue distribution, expressed in stem bases and leaves.

The protein localises to the membrane. May act as a component of the auxin efflux carrier. In Oryza sativa subsp. japonica (Rice), this protein is Probable auxin efflux carrier component 3b.